A 248-amino-acid polypeptide reads, in one-letter code: Probable transcriptional regulatory protein P9303_05381 (248 aa).

This sequence belongs to the TACO1 family.

It localises to the cytoplasm. The polypeptide is Probable transcriptional regulatory protein P9303_05381 (Prochlorococcus marinus (strain MIT 9303)).